We begin with the raw amino-acid sequence, 1388 residues long: Rho-associated protein kinase 2 (1388 aa).

Residues 1–24 (MSRPPPTGKMPGAPEAAAGDGAGA) are disordered. The Protein kinase domain occupies 92–354 (YDVVKVIGRG…VEEIKSASFF (263 aa)). Residues 98-106 (IGRGAFGEV) and K121 each bind ATP. Residue D214 is the Proton acceptor of the active site. The AGC-kinase C-terminal domain occupies 357–425 (DQWNWDNIRE…FRENLLLSDS (69 aa)). Positions 363-784 (NIRETAAPVV…LNELLKQKDV (422 aa)) are interaction with PPP1R12A. Residues 373 to 420 (PELSSDIDSSNFDDIEDDKGDVETFPIPKAFVGNQLPFIGFTYFRENL) are interaction with NPM1. T414 is modified (phosphothreonine; by ROCK2). 2 coiled-coil regions span residues 439–1024 (SEES…EKQL) and 1052–1131 (SDTD…IGMD). The region spanning 497–573 (TLRQLEREKA…LDEANALLRT (77 aa)) is the REM-1 domain. The segment covering 513–530 (AEYQRKADHEADKKRNLE) has biased composition (basic and acidic residues). Positions 513–532 (AEYQRKADHEADKKRNLEND) are disordered. At Y722 the chain carries Phosphotyrosine; by SRC. Residues 979–1047 (TSDVANLANE…LAEIMNRKEP (69 aa)) form the RhoBD domain. The segment at 979–1047 (TSDVANLANE…LAEIMNRKEP (69 aa)) is RHOA binding. At S1137 the chain carries Phosphoserine. One can recognise a PH domain in the interval 1150–1349 (ESRLEGWLSL…WVSRLVKKIP (200 aa)). At T1212 the chain carries Phosphothreonine. The Phorbol-ester/DAG-type zinc-finger motif lies at 1260–1315 (GHEFIPTLYHFPTNCEACMKPLWHMFKPPPALECSRCHIKCHKDHMDKKEEIIAPC). Residues 1345-1388 (VKKIPKKPPAPDPFARSSPRTSMKIQQNQSIRRPSRQLAPNKPS) form a disordered region. Phosphoserine is present on residues S1362 and S1374. Residues 1362 to 1376 (SPRTSMKIQQNQSIR) show a composition bias toward polar residues.

The protein belongs to the protein kinase superfamily. AGC Ser/Thr protein kinase family. As to quaternary structure, homodimer. Interacts with IRS1. Interacts with RAF1. Interacts with RHOA (activated by GTP), RHOB, RHOC. Interacts with PPP1R12A. Interacts with EP300. Interacts with CHORDC1. Interacts with BRCA2. Interacts with NPM1; this interaction enhances its activity. Interacts with SORL1. Interacts with PJVK. Mg(2+) serves as cofactor. In terms of processing, autophosphorylated. Phosphorylation at Tyr-722 reduces its binding to RHOA and is crucial for focal adhesion dynamics. Dephosphorylation by PTPN11 stimulates its RHOA binding activity. Cleaved by granzyme B during apoptosis. This leads to constitutive activation of the kinase and membrane blebbing. Highly expressed in brain, lung, liver, skeletal muscle, kidney and testis.

The protein localises to the cytoplasm. Its subcellular location is the cell membrane. The protein resides in the nucleus. It is found in the cytoskeleton. It localises to the microtubule organizing center. The protein localises to the centrosome. The enzyme catalyses L-seryl-[protein] + ATP = O-phospho-L-seryl-[protein] + ADP + H(+). It catalyses the reaction L-threonyl-[protein] + ATP = O-phospho-L-threonyl-[protein] + ADP + H(+). Its activity is regulated as follows. Activated by RHOA binding. Inhibited by Y-27632. Its function is as follows. Protein kinase which is a key regulator of actin cytoskeleton and cell polarity. Involved in regulation of smooth muscle contraction, actin cytoskeleton organization, stress fiber and focal adhesion formation, neurite retraction, cell adhesion and motility via phosphorylation of ADD1, BRCA2, CNN1, EZR, DPYSL2, EP300, MSN, MYL9/MLC2, NPM1, RDX, PPP1R12A and VIM. Phosphorylates SORL1 and IRF4. Acts as a negative regulator of VEGF-induced angiogenic endothelial cell activation. Positively regulates the activation of p42/MAPK1-p44/MAPK3 and of p90RSK/RPS6KA1 during myogenic differentiation. Plays an important role in the timely initiation of centrosome duplication. Inhibits keratinocyte terminal differentiation. May regulate closure of the eyelids and ventral body wall through organization of actomyosin bundles. Plays a critical role in the regulation of spine and synaptic properties in the hippocampus. Plays a role in placental homeostasis during the perinatal period. Plays an important role in generating the circadian rhythm of the aortic myofilament Ca(2+) sensitivity and vascular contractility by modulating the myosin light chain phosphorylation. This Rattus norvegicus (Rat) protein is Rho-associated protein kinase 2 (Rock2).